Reading from the N-terminus, the 1132-residue chain is MLSILHSLSWMAHWINPTATIAPSTPPQAGEKNANVKNGTVQTNGVNHTERLAGRAPNLLHPAIDYPGITSYEAGGSLILTDIFPTVLFMFVVLFCRWFNGFAPRQERFQRLEYEAILRRRRFRVQSEESEELEDHEAYSETDICTQLIASSANVACNINVDLVNQNRFYFFVKQNNEDETAVPSDVPPPETSIKNEDTEVNLVFASAEDNGYISSTFEVSETSLMVTSEVYEVEKVSVNEDQSSRPVNVIVNESDDEQSLRSQDGSRCSDEAMNSCMSASEDEDVESQEDSYHVNDATEDSVSSIKTQEDEPIEEELASCHSDEDDHQNEVLGDEEASKYDNLPVEMRSAKEGDESEGTIDSSVSSSTSSTPDDDEDDSATSYDSDDIEIQMFEYDLGTVCASASISIPRPSIIPKKNKKAEVNANEERMDDVSVSPGRSDSPGGGGGHSDSFQDPLDPGEQLGSDDEEQEDPRDYKRGGYHPVNIGDVFNSRYHVIRKLGWGHFSTVWLAWDTQEKRFTAMKIVKSAEHYTEAALDEIKLLLSVRGADPEDTGCHKVVQLLDEFTVTGINGQHVAMVFEVLGCNLLKLIIRSNYRGLHLEQVRKICKQILEALRYMHEKCGIIHTDIKPENVLITMSREEIKIMAQHAVVARKMNMKMSGSAVSTAPDHLVKMAQENMTKNKKKKMKKKAKKQREKLEAELAGLEGLKMDANGLQEAYNNAPQNGIRMRPPSLLFNGPIPQLLQGSSCVNTPSSPRSVPPPPALYPQAGGVCNQTYHLSQVILNEQVELESFNTSQVEDVNIEDAVNGNGNGTNNKIELKSPDRFDRTTLTPFSDPESKIGELASPSSEFLSSPMSMLPPGGVLPAPPVGPNIADPYCDIDVKIADLGNACWVNHHYTDDIQTRQYRALEVLIGSGYGPPADIWSTACMAFELATGDYLFEPHQGDNYSRDEDHLAHISELLGQISPSIYKKGKHWREFFHKNGNLLHIHNLKPWSLYEVLRQKYEWSHEDAQQFESFLRPMLDFDQEKRATANDALKHPFLLPFGGKAPRDPEVLQRLYPDGQVPEALDGNQEVYRDENDSNSASERSANRSAGSDDEEEFHMDRPGPSGVINEPADVSEIESFQLNLQ.

A helical transmembrane segment spans residues Gly75–Phe95. Disordered stretches follow at residues Asn240–Asp388 and Asn419–Gly481. 2 stretches are compositionally biased toward acidic residues: residues Ser281 to Glu290 and Asp311 to Glu336. The span at Asp362 to Thr372 shows a compositional bias: low complexity. Residues Pro373–Asp388 show a composition bias toward acidic residues. Positions Lys421–Asp433 are enriched in basic and acidic residues. Residues Val434 to Ser443 show a composition bias toward low complexity. Residues Tyr495–Leu1044 enclose the Protein kinase domain. Residues Leu501–Val509 and Lys524 contribute to the ATP site. The Proton acceptor role is filled by Asp628. Residues Gln1066–Val1121 are disordered. Low complexity predominate over residues Ser1084–Ala1096.

Belongs to the protein kinase superfamily. Ser/Thr protein kinase family.

It localises to the membrane. It carries out the reaction L-seryl-[protein] + ATP = O-phospho-L-seryl-[protein] + ADP + H(+). It catalyses the reaction L-threonyl-[protein] + ATP = O-phospho-L-threonyl-[protein] + ADP + H(+). In terms of biological role, required for embryogenesis and germline development in both adult hermaphrodites and males. SR-protein kinase (SRPK) that binds directly to and phosphorylates RS domains. The protein is Serine/threonine-protein kinase spk-1 (spk-1) of Caenorhabditis briggsae.